Consider the following 284-residue polypeptide: Tropomyosin (284 aa).

A coiled-coil region spans residues 1–284 (MEAIKNKMQA…DQTFAELTGY (284 aa)).

It belongs to the tropomyosin family. In terms of assembly, homodimer.

Functionally, tropomyosin, in association with the troponin complex, plays a central role in the calcium dependent regulation of muscle contraction. The chain is Tropomyosin from Dermatophagoides pteronyssinus (European house dust mite).